Consider the following 358-residue polypeptide: Diels-Alderase phmD (358 aa).

It belongs to the Diels-Alderase family.

The protein operates within mycotoxin biosynthesis. Functionally, diels-Alderase; part of the gene cluster that mediates the biosynthesis of the mycotoxins phomacins, leucine-derived cytochalasans with potent actin polymerization-inhibitory activities and monocot-specific antigerminative activities. The first step in the pathway is catalyzed by the hybrid PKS-NRPS phmA, assisted by the enoyl reductase phmE, that are responsible for fusion of the leucine precursor and the polyketide backbone to produce a 2-pyrrolidone intermediate. The polyketide synthase module (PKS) of phmA is responsible for the synthesis of the polyketide backbone and the downstream nonribosomal peptide synthetase (NRPS) amidates the carboxyl end of the polyketide with the leucine precursor. Because phmA lacks a designated enoylreductase (ER) domain, the required activity is provided the enoyl reductase phmE. Reduction by the hydrolyase phmG, followed by dehydration and intra-molecular Diels-Alder cyclization by the Diels-Alderase phmD then yield the required isoindolone-fused macrocycle. A number of oxidative steps catalyzed by the tailoring cytochrome P450 monooxygenase phmB, the FAD-linked oxidoreductase phmC and the short-chain dehydrogenase/reductase phmF, are further required to afford the final products, phomacin D and phomacin E. The polypeptide is Diels-Alderase phmD (Phaeosphaeria nodorum (strain SN15 / ATCC MYA-4574 / FGSC 10173) (Glume blotch fungus)).